We begin with the raw amino-acid sequence, 20 residues long: Citrate synthase (20 aa).

This sequence belongs to the citrate synthase family. In terms of assembly, homodimer.

The catalysed reaction is oxaloacetate + acetyl-CoA + H2O = citrate + CoA + H(+). It functions in the pathway carbohydrate metabolism; tricarboxylic acid cycle; isocitrate from oxaloacetate: step 1/2. This Populus euphratica (Euphrates poplar) protein is Citrate synthase.